Reading from the N-terminus, the 112-residue chain is MKKVEAIIRPFKLDEVKIALVNAGIVGMTVSEVRGFGRQKGQTERYRGSEYTVEFLQKLKVEIVVDDNQVDMVVDKIIAAARTGEIGDGKIFISPVEQVIRIRTGEKNTEAV.

S49 is modified (phosphoserine). Y51 is modified (O-UMP-tyrosine).

This sequence belongs to the P(II) protein family. As to quaternary structure, homotrimer. Post-translationally, phosphorylation dependent on the nitrogen source and spectral light quality.

Its function is as follows. P-II indirectly controls the transcription of the GS gene (glnA). P-II prevents NR-II-catalyzed conversion of NR-I to NR-I-phosphate, the transcriptional activator of glnA. When P-II is phosphorylated, these events are reversed. In nitrogen-limiting conditions, when the ratio of Gln to 2-ketoglutarate decreases, P-II is phosphorylated which allows the deadenylation of glutamine synthetase (GS), thus activating the enzyme. This is Nitrogen regulatory protein P-II (glnB) from Nostoc punctiforme (strain ATCC 29133 / PCC 73102).